Here is a 150-residue protein sequence, read N- to C-terminus: Peptide deformylase (150 aa).

Fe cation-binding residues include Cys-88 and His-130. Glu-131 is a catalytic residue. His-134 provides a ligand contact to Fe cation.

It belongs to the polypeptide deformylase family. The cofactor is Fe(2+).

It carries out the reaction N-terminal N-formyl-L-methionyl-[peptide] + H2O = N-terminal L-methionyl-[peptide] + formate. Functionally, removes the formyl group from the N-terminal Met of newly synthesized proteins. Requires at least a dipeptide for an efficient rate of reaction. N-terminal L-methionine is a prerequisite for activity but the enzyme has broad specificity at other positions. In Desulfitobacterium hafniense (strain Y51), this protein is Peptide deformylase.